The chain runs to 366 residues: Chorismate synthase (366 aa).

NADP(+)-binding residues include arginine 48 and arginine 54. FMN is bound by residues 125–127 (RSS), 237–238 (NA), glycine 277, 292–296 (KPTSS), and arginine 318.

It belongs to the chorismate synthase family. As to quaternary structure, homotetramer. FMNH2 serves as cofactor.

It catalyses the reaction 5-O-(1-carboxyvinyl)-3-phosphoshikimate = chorismate + phosphate. The protein operates within metabolic intermediate biosynthesis; chorismate biosynthesis; chorismate from D-erythrose 4-phosphate and phosphoenolpyruvate: step 7/7. Functionally, catalyzes the anti-1,4-elimination of the C-3 phosphate and the C-6 proR hydrogen from 5-enolpyruvylshikimate-3-phosphate (EPSP) to yield chorismate, which is the branch point compound that serves as the starting substrate for the three terminal pathways of aromatic amino acid biosynthesis. This reaction introduces a second double bond into the aromatic ring system. This is Chorismate synthase from Acidovorax sp. (strain JS42).